A 173-amino-acid chain; its full sequence is Thiol-disulfide oxidoreductase ResA (173 aa).

The helical; Signal-anchor for type II membrane protein transmembrane segment at 10–29 threads the bilayer; sequence VIILLILSGAVGFTLYQGYF. Residues 35 to 173 form the Thioredoxin domain; it reads MEIGKEAPNF…LEEYLKKITP (139 aa). Cys73 and Cys76 are disulfide-bonded.

The protein belongs to the thioredoxin family. ResA subfamily.

It is found in the cell membrane. It functions in the pathway protein modification; cytochrome c assembly. Thiol-disulfide oxidoreductase which is required in disulfide reduction during c-type cytochrome synthesis. May accept reducing equivalents from CcdA, leading to breakage of disulfide bonds in apocytochrome c; following this reduction heme can be covalently attached. This chain is Thiol-disulfide oxidoreductase ResA, found in Bacillus cereus (strain ATCC 10987 / NRS 248).